A 190-amino-acid polypeptide reads, in one-letter code: Crossover junction endodeoxyribonuclease RuvC (190 aa).

Residues aspartate 7, glutamate 68, and aspartate 141 contribute to the active site. The Mg(2+) site is built by aspartate 7, glutamate 68, and aspartate 141.

It belongs to the RuvC family. In terms of assembly, homodimer which binds Holliday junction (HJ) DNA. The HJ becomes 2-fold symmetrical on binding to RuvC with unstacked arms; it has a different conformation from HJ DNA in complex with RuvA. In the full resolvosome a probable DNA-RuvA(4)-RuvB(12)-RuvC(2) complex forms which resolves the HJ. Mg(2+) is required as a cofactor.

It localises to the cytoplasm. It carries out the reaction Endonucleolytic cleavage at a junction such as a reciprocal single-stranded crossover between two homologous DNA duplexes (Holliday junction).. The RuvA-RuvB-RuvC complex processes Holliday junction (HJ) DNA during genetic recombination and DNA repair. Endonuclease that resolves HJ intermediates. Cleaves cruciform DNA by making single-stranded nicks across the HJ at symmetrical positions within the homologous arms, yielding a 5'-phosphate and a 3'-hydroxyl group; requires a central core of homology in the junction. The consensus cleavage sequence is 5'-(A/T)TT(C/G)-3'. Cleavage occurs on the 3'-side of the TT dinucleotide at the point of strand exchange. HJ branch migration catalyzed by RuvA-RuvB allows RuvC to scan DNA until it finds its consensus sequence, where it cleaves and resolves the cruciform DNA. The protein is Crossover junction endodeoxyribonuclease RuvC of Endomicrobium trichonymphae.